A 151-amino-acid polypeptide reads, in one-letter code: MERPEPELIRQSWRAVSRSPLEHGTVLFARLFALEPDLLPLFQYNCRQFSSPEDCLSSPEFLDHIRKVMLVIDAAVTNVEDLSSLEEYLASLGRKHRAVGVKLSSFSTVGESLLYMLEKCLGPAFTPATRAAWSQLYGAVVQAMSRGWDSE.

Positions 1–149 (MERPEPELIR…VVQAMSRGWD (149 aa)) constitute a Globin domain. Positions 64 and 96 each coordinate heme b.

Belongs to the globin family. Monomer. Homodimer and homotetramer; disulfide-linked. Mainly monomeric but also detected as part of homodimers and homotetramers. Interacts with 14-3-3 proteins; regulates the phosphorylation of NGB. Could interact (ferrous form) with G-alpha(i) proteins (GTP-bound form). In terms of processing, phosphorylated during hypoxia by ERK1/ERK2. Phosphorylation regulates the heme pocket hexacoordination preventing the association of His-64 with the heme metal center. Thereby, promotes the access of dioxygen and nitrite to the heme and stimulates the nitrite reductase activity. Phosphorylation during hypoxia is stabilized by 14-3-3 proteins.

The protein resides in the cytoplasm. It localises to the cytosol. The protein localises to the mitochondrion matrix. The enzyme catalyses Fe(III)-heme b-[protein] + nitric oxide + H2O = Fe(II)-heme b-[protein] + nitrite + 2 H(+). Monomeric globin with a bis-histidyl six-coordinate heme-iron atom through which it can bind dioxygen, carbon monoxide and nitric oxide. Could help transport oxygen and increase its availability to the metabolically active neuronal tissues, though its low quantity in tissues as well as its high affinity for dioxygen, which may limit its oxygen-releasing ability, argue against it. The ferrous/deoxygenated form exhibits a nitrite reductase activity and it could produce nitric oxide which in turn inhibits cellular respiration in response to hypoxia. In its ferrous/deoxygenated state, it may also exhibit GDI (Guanine nucleotide Dissociation Inhibitor) activity toward heterotrimeric G-alpha proteins, thereby regulating signal transduction to facilitate neuroprotective responses in the wake of hypoxia and associated oxidative stress. The polypeptide is Neuroglobin (Macaca mulatta (Rhesus macaque)).